Consider the following 197-residue polypeptide: Phospholipid hydroperoxide glutathione peroxidase GPX4 (197 aa).

At serine 40 the chain carries Phosphoserine. Residue selenocysteine 73 is part of the active site. Residue selenocysteine 73 is a non-standard amino acid, selenocysteine.

This sequence belongs to the glutathione peroxidase family. Monomer. Has a tendency to form higher mass oligomers. Interacts with FUNDC1; this interaction promotes GPX4 recruitment into mitochondria through TOM/TIM complex where it is degraded by mitophagy. In terms of tissue distribution, widely expressed with the highest levels in testis, heart, cerebrum, ileum, stomach, liver, jejunum and epididymis. Expressed primarily in testis and sperm midpiece (at protein level). Expressed in brain (at protein level). Expressed in heart, liver and kidney (at protein level). Expressed in retina, especially in inner segments of photoreceptor cells (at protein level). As to expression, highly expressed during embryogenesis. Down-regulated between 14.5 dpc and 17.5 dpc. Highly expressed during embryogenesis. In contrast to isoform Mitochondrial and isoform Nuclear, which are down-regulated between 14.5 dpc and 17.5 dpc, remains constant. In terms of tissue distribution, mainly expressed in sperm. Weakly expressed during embryogenesis. Down-regulated between 14.5 dpc and 17.5 dpc.

Its subcellular location is the mitochondrion. The protein resides in the cytoplasm. It localises to the nucleus. It carries out the reaction a hydroperoxy polyunsaturated fatty acid + 2 glutathione = a hydroxy polyunsaturated fatty acid + glutathione disulfide + H2O. The enzyme catalyses 2 glutathione + H2O2 = glutathione disulfide + 2 H2O. It catalyses the reaction tert-butyl hydroperoxide + 2 glutathione = tert-butanol + glutathione disulfide + H2O. The catalysed reaction is cumene hydroperoxide + 2 glutathione = 2-phenylpropan-2-ol + glutathione disulfide + H2O. It carries out the reaction (9S)-hydroperoxy-(10E,12Z)-octadecadienoate + 2 glutathione = (9S)-hydroxy-(10E,12Z)-octadecadienoate + glutathione disulfide + H2O. The enzyme catalyses (13S)-hydroperoxy-(9Z,11E)-octadecadienoate + 2 glutathione = (13S)-hydroxy-(9Z,11E)-octadecadienoate + glutathione disulfide + H2O. It catalyses the reaction (5S)-hydroperoxy-(6E,8Z,11Z,14Z)-eicosatetraenoate + 2 glutathione = (5S)-hydroxy-(6E,8Z,11Z,14Z)-eicosatetraenoate + glutathione disulfide + H2O. The catalysed reaction is (12R)-hydroperoxy-(5Z,8Z,10E,14Z)-eicosatetraenoate + 2 glutathione = (12R)-hydroxy-(5Z,8Z,10E,14Z)-eicosatetraenoate + glutathione disulfide + H2O. It carries out the reaction (12S)-hydroperoxy-(5Z,8Z,10E,14Z)-eicosatetraenoate + 2 glutathione = (12S)-hydroxy-(5Z,8Z,10E,14Z)-eicosatetraenoate + glutathione disulfide + H2O. The enzyme catalyses (15S)-hydroperoxy-(5Z,8Z,11Z,13E)-eicosatetraenoate + 2 glutathione = (15S)-hydroxy-(5Z,8Z,11Z,13E)-eicosatetraenoate + glutathione disulfide + H2O. It catalyses the reaction (5S)-hydroperoxy-(6E,8Z,11Z,14Z,17Z)-eicosapentaenoate + 2 glutathione = (5S)-hydroxy-(6E,8Z,11Z,14Z,17Z)-eicosapentaenoate + glutathione disulfide + H2O. The catalysed reaction is (12S)-hydroperoxy-(5Z,8Z,10E,14Z,17Z)-eicosapentaenoate + 2 glutathione = (12S)-hydroxy-(5Z,8Z,10E,14Z,17Z)-eicosapentaenoate + glutathione disulfide + H2O. It carries out the reaction (15S)-hydroperoxy-(5Z,8Z,11Z,13E,17Z)-eicosapentaenoate + 2 glutathione = (15S)-hydroxy-(5Z,8Z,11Z,13E,17Z)-eicosapentaenoate + glutathione disulfide + H2O. The enzyme catalyses (15S)-hydroperoxy-(11Z,13E)-eicosadienoate + 2 glutathione = (15S)-hydroxy-(11Z,13E)-eicosadienoate + glutathione disulfide + H2O. It catalyses the reaction (17S)-hydroperoxy-(4Z,7Z,10Z,13Z,15E,19Z)-docosahexaenoate + 2 glutathione = (17S)-hydroxy-(4Z,7Z,10Z,13Z,15E,19Z)-docosahexaenoate + glutathione disulfide + H2O. The catalysed reaction is a hydroperoxy-1,2-diacyl-glycero-3-phosphocholine + 2 glutathione = a hydroxy-1,2-diacyl-glycero-3-phosphocholine + glutathione disulfide + H2O. Functionally, essential antioxidant peroxidase that directly reduces phospholipid hydroperoxide even if they are incorporated in membranes and lipoproteins. Can also reduce fatty acid hydroperoxide, cholesterol hydroperoxide and thymine hydroperoxide. Plays a key role in protecting cells from oxidative damage by preventing membrane lipid peroxidation. Required to prevent cells from ferroptosis, a non-apoptotic cell death resulting from an iron-dependent accumulation of lipid reactive oxygen species. The presence of selenocysteine (Sec) versus Cys at the active site is essential for life: it provides resistance to overoxidation and prevents cells against ferroptosis. The presence of Sec at the active site is also essential for the survival of a specific type of parvalbumin-positive interneurons, thereby preventing against fatal epileptic seizures. May be required to protect cells from the toxicity of ingested lipid hydroperoxides. Required for normal sperm development and male fertility. Essential for maturation and survival of photoreceptor cells. Plays a role in a primary T-cell response to viral and parasitic infection by protecting T-cells from ferroptosis and by supporting T-cell expansion. Plays a role of glutathione peroxidase in platelets in the arachidonic acid metabolism. Reduces hydroperoxy ester lipids formed by a 15-lipoxygenase that may play a role as down-regulator of the cellular 15-lipoxygenase pathway. Can also reduce small soluble hydroperoxides such as H2O2 and tert-butyl hydroperoxide. In terms of biological role, specifically able to suppress the production of leukotriene and prostaglandin in response to several stimuli by reducing fatty acid hydroperoxide. Specifically required to prevent mitochondrial cell death by mediating reduction of cardiolipin hydroperoxide. Also required for normal sperm development and male fertility. Its function is as follows. Required for male fertility by stabilizing the condensed chromatin in sperm nuclei. This is Phospholipid hydroperoxide glutathione peroxidase GPX4 from Mus musculus (Mouse).